The following is a 504-amino-acid chain: Chorion-specific transcription factor GCMb (504 aa).

Residues 19-174 constitute a DNA-binding region (GCM); the sequence is LTWDINDPQM…KSETEGRRSA (156 aa). Positions 81, 87, 91, 118, 121, 130, 157, and 159 each coordinate Zn(2+). Basic and acidic residues-rich tracts occupy residues 155–172 and 188–203; these read GVHD…EGRR and RRSE…DIRG. The tract at residues 155–203 is disordered; the sequence is GVHDHPRPESKSETEGRRSALKRQMASFYQPQKRRSEEPEARSTQDIRG. The C-terminal conserved inhibitory domain (CCID) stretch occupies residues 379 to 393; sequence LQTVITTTVAYQAYQ. The segment at 438–472 is disordered; it reads ASPSGRAPLKVPGDCQAPRPTLDFPQEADPSGTDG.

It is found in the nucleus. Transcription factor that binds specific sequences on gene promoters and activate their transcription. Through the regulation of gene transcription, may play a role in parathyroid gland development. This Mus musculus (Mouse) protein is Chorion-specific transcription factor GCMb.